The following is an 84-amino-acid chain: CDC42 small effector protein 2-A (84 aa).

S-palmitoyl cysteine attachment occurs at residues Cys10 and Cys11. The CRIB domain occupies 29–42 (IGEPTNFVHTAHVG).

Belongs to the CDC42SE/SPEC family.

It is found in the cytoplasm. The protein localises to the cytoskeleton. It localises to the cell membrane. Its function is as follows. Probably involved in the organization of the actin cytoskeleton by acting downstream of CDC42, inducing actin filament assembly. The chain is CDC42 small effector protein 2-A (cdc42se2-a) from Xenopus laevis (African clawed frog).